The sequence spans 326 residues: MTLDEIAKLAGVSKTTASYVINGKAQKYRISEKTQHKVMAVVEQYNFRPDHAASALRAGNSRSFGLIIPDLENTSYARLAKLLEQNSRQAGYQILIACSDDDPQIEMAAAEALVSRRIDALFVASGIPSASEYYLKLQQSGTPVIAIDRALDDEYFSCVISEDFGAAFELTRSVLTQDVHSVGLVGALPELNVSREREQGFAMAVKQRGLPTTLGYGEHFNREEGRKVFAKWVANDQLPDAVVATSYTLLEGILDVLLEQPELMQKVRLATFGDNRLLDFLPIRVNSLPQQFELIADSALALALNASAKRYQTGIELIPRQLKVRT.

Residues 1–58 (MTLDEIAKLAGVSKTTASYVINGKAQKYRISEKTQHKVMAVVEQYNFRPDHAASALRA) form the HTH lacI-type domain. The H-T-H motif DNA-binding region spans 3 to 22 (LDEIAKLAGVSKTTASYVIN).

As to quaternary structure, homodimer.

Its activity is regulated as follows. Interaction with F1P may induce a structural change in the DNA spacer region between the -35 and -10 elements, thereby facilitating RNAP binding to the promoter to trigger the transcriptional activation of the fru operon. Interaction with F1P does not release FruR from its binding sequence. Regulates the expression of the fruBKA (fru) operon, which encodes proteins involved in the import and metabolism of fructose. In the absence of fructose 1-phosphate (F1P), binds to the promoter region of fruB, interferes with the binding of the RNA polymerase (RNAP) to the promoter and represses the expression of the operon. In the presence of F1P, activates the transcription of the fru operon by facilitating the binding of RNAP to the promoter. Essential for the expression of the fru operon and thus for growth on fructose. The protein is Fructose operon regulatory protein of Vibrio cholerae serotype O1 (strain ATCC 39315 / El Tor Inaba N16961).